We begin with the raw amino-acid sequence, 1342 residues long: DNA-directed RNA polymerase subunit beta (1342 aa).

This sequence belongs to the RNA polymerase beta chain family. In terms of assembly, the RNAP catalytic core consists of 2 alpha, 1 beta, 1 beta' and 1 omega subunit. When a sigma factor is associated with the core the holoenzyme is formed, which can initiate transcription.

The catalysed reaction is RNA(n) + a ribonucleoside 5'-triphosphate = RNA(n+1) + diphosphate. In terms of biological role, DNA-dependent RNA polymerase catalyzes the transcription of DNA into RNA using the four ribonucleoside triphosphates as substrates. This chain is DNA-directed RNA polymerase subunit beta, found in Proteus mirabilis (strain HI4320).